Reading from the N-terminus, the 313-residue chain is Nodulation protein D 3 (313 aa).

Residues 6 to 63 (LDLNLLVALDALMTKRSVTAAARSINLSQPAMSSAIARLRSYFQDELFRMQGRELITT) enclose the HTH lysR-type domain. The H-T-H motif DNA-binding region spans 23–42 (VTAAARSINLSQPAMSSAIA).

The protein belongs to the LysR transcriptional regulatory family.

In terms of biological role, nodD regulates the expression of the nodABCFE genes which encode other nodulation proteins. NodD is also a negative regulator of its own expression. Binds flavonoids as inducers. In Rhizobium meliloti (strain 1021) (Ensifer meliloti), this protein is Nodulation protein D 3 (nodD3).